The sequence spans 157 residues: 2-C-methyl-D-erythritol 2,4-cyclodiphosphate synthase (157 aa).

2 residues coordinate a divalent metal cation: Asp-8 and His-10. Residues Asp-8–His-10 and His-34–Ser-35 contribute to the 4-CDP-2-C-methyl-D-erythritol 2-phosphate site. Residue His-42 coordinates a divalent metal cation. Residues Asp-56–Gly-58, Phe-61–Asp-65, Ala-100–Ala-106, Thr-132–Glu-135, Phe-139, and Arg-142 each bind 4-CDP-2-C-methyl-D-erythritol 2-phosphate.

The protein belongs to the IspF family. As to quaternary structure, homotrimer. A divalent metal cation serves as cofactor.

The enzyme catalyses 4-CDP-2-C-methyl-D-erythritol 2-phosphate = 2-C-methyl-D-erythritol 2,4-cyclic diphosphate + CMP. It functions in the pathway isoprenoid biosynthesis; isopentenyl diphosphate biosynthesis via DXP pathway; isopentenyl diphosphate from 1-deoxy-D-xylulose 5-phosphate: step 4/6. Its function is as follows. Involved in the biosynthesis of isopentenyl diphosphate (IPP) and dimethylallyl diphosphate (DMAPP), two major building blocks of isoprenoid compounds. Catalyzes the conversion of 4-diphosphocytidyl-2-C-methyl-D-erythritol 2-phosphate (CDP-ME2P) to 2-C-methyl-D-erythritol 2,4-cyclodiphosphate (ME-CPP) with a corresponding release of cytidine 5-monophosphate (CMP). The polypeptide is 2-C-methyl-D-erythritol 2,4-cyclodiphosphate synthase (Azotobacter vinelandii (strain DJ / ATCC BAA-1303)).